The chain runs to 551 residues: Scaffold protein OPG125 (551 aa).

The protein belongs to the orthopoxvirus protein OPG125 family. Homotrimer. Self-assembles to form a layer. Interacts with OPG158 (via N-terminus); this interaction is necessary for OPG125 association with membranes.

It localises to the membrane. Its function is as follows. Scaffold protein which forms a transitory spherical honeycomb lattice providing curvature and rigidity to the convex membrane of crescent and immature virions (IV). This association occurs concomitantly with viral membrane formation. Targeted by the drug rifampicin, which prevents the formation of this lattice, and hence virus morphogenesis. In the presence of rifampicin, irregularly shaped membranes that lack the honeycomb layer accumulate around areas of electron-dense viroplasm. This layer is lost from virions during maturation from IV to mature virion (MV), through the proteolysis of OPG158 N-terminus. This is Scaffold protein OPG125 (OPG125) from Homo sapiens (Human).